The following is a 540-amino-acid chain: Sterol O-acyltransferase 1 (540 aa).

Residues 1–20 (MSLRNRLSKSGENPEQDEAQ) are disordered. Residues 1 to 128 (MSLRNRLSKS…LDELFEVDHI (128 aa)) lie on the Cytoplasmic side of the membrane. S2 is modified (phosphoserine). H127 provides a ligand contact to cholesterol. Residues 129–150 (RTIYHMFIALLILFVLSTIVVD) form a helical membrane-spanning segment. Topologically, residues 151-170 (YIDEGRLVLEFNLLAYAFGK) are lumenal. A helical transmembrane segment spans residues 171–196 (FPTVIWTWWAMFLSTLSIPYFLFQRW). At 197–208 (AHGYSKSSHPLI) the chain is on the cytoplasmic side. The chain crosses the membrane as a helical span at residues 209–234 (YSLVHGLLFLVFQLGVLGFVPTYVVL). The Lumenal segment spans residues 235-242 (AYTLPPAS). Residues 243–266 (RFILILEQIRLIMKAHSFVRENIP) traverse the membrane as a helical segment. Residues 267–309 (RVLNAAKEKSSKDPLPTVNQYLYFLFAPTLIYRDNYPRTPTVR) are Cytoplasmic-facing. The chain crosses the membrane as a helical span at residues 310–342 (WGYVAMQFLQVFGCLFYVYYIFERLCAPLFRNI). The Lumenal segment spans residues 343–359 (KQEPFSARVLVLCVFNS). The helical transmembrane segment at 360–385 (ILPGVLILFLSFFAFLHCWLNAFAEM) threads the bilayer. At 386–433 (LRFGDRMFYKDWWNSTSYSNYYRTWNVVVHDWLYYYVYKDLLWFFSKR) the chain is on the cytoplasmic side. The FYXDWWN motif motif lies at 393–399 (FYKDWWN). Residues N405, R408, N411, H415, Y423, K435, and S446 each coordinate an acyl-CoA. Residues 434-458 (FKSAAMLAVFALSAVVHEYALAICL) traverse the membrane as a helical segment. H450 is an active-site residue. Residues 459-464 (SYFYPV) lie on the Lumenal side of the membrane. The chain crosses the membrane as a helical span at residues 465-480 (LFVLFMFFGMAFNFIV). Topologically, residues 481-486 (NDSRKR) are cytoplasmic. Residues 487–518 (PIWNIMVWASLFLGYGLILCFYSQEWYARQHC) traverse the membrane as a helical segment. Cysteines 518 and 536 form a disulfide. Topologically, residues 519–540 (PLKNPTFLDYVRPRTWTCRYVF) are lumenal.

Belongs to the membrane-bound acyltransferase family. Sterol o-acyltransferase subfamily. May form homo- or heterodimers. Interacts with UBIAD1.

It localises to the endoplasmic reticulum membrane. The catalysed reaction is a sterol + a long-chain fatty acyl-CoA = a long-chain 3-hydroxysterol ester + CoA. It carries out the reaction cholesterol + an acyl-CoA = a cholesterol ester + CoA. It catalyses the reaction cholesterol + (9Z)-octadecenoyl-CoA = cholesteryl (9Z-octadecenoate) + CoA. The enzyme catalyses cholesterol + hexadecanoyl-CoA = cholesteryl hexadecanoate + CoA. The catalysed reaction is octadecanoyl-CoA + cholesterol = cholesteryl octadecanoate + CoA. It carries out the reaction (9Z,12Z)-octadecadienoyl-CoA + cholesterol = cholesteryl (9Z,12Z)-octadecadienoate + CoA. It catalyses the reaction (5Z,8Z,11Z,14Z)-eicosatetraenoyl-CoA + cholesterol = cholesteryl (5Z,8Z,11Z,14Z)-eicosatetraenoate + CoA. The enzyme catalyses (9Z)-hexadecenoyl-CoA + cholesterol = cholesteryl (9Z)-hexadecenoate + CoA. The catalysed reaction is (11Z)-octadecenoyl-CoA + cholesterol = cholesteryl (11Z)-octadecenoate + CoA. It carries out the reaction (7Z)-octadecenoyl-CoA + cholesterol = cholesteryl (7Z)-octadecenoate + CoA. Its function is as follows. Catalyzes the formation of fatty acid-cholesterol esters, which are less soluble in membranes than cholesterol. Plays a role in lipoprotein assembly and dietary cholesterol absorption. Preferentially utilizes oleoyl-CoA ((9Z)-octadecenoyl-CoA) as a substrate: shows a higher activity towards an acyl-CoA substrate with a double bond at the delta-9 position (9Z) than towards saturated acyl-CoA or an unsaturated acyl-CoA with a double bond at the delta-7 (7Z) or delta-11 (11Z) positions. The chain is Sterol O-acyltransferase 1 from Mus musculus (Mouse).